A 280-amino-acid polypeptide reads, in one-letter code: Putative aquaporin-10 (280 aa).

At 1 to 8 the chain is on the cytoplasmic side; it reads MEAVSSEY. The chain crosses the membrane as a helical span at residues 9–29; sequence YFPLYSALGYFALVFGIGEIA. Residues 30-64 are Extracellular-facing; the sequence is RIITAKYVSPRGNSQLFLYELIGTIQMCTCVYENG. A helical transmembrane segment spans residues 65 to 85; it reads IIFKNYGFPAIFICVALLLTA. The Cytoplasmic segment spans residues 86–114; sequence GNIFNRGAMTNCAPIFEQFVFGNLGSSKF. A helical membrane pass occupies residues 115–135; that stretch reads LTILSAQLIGATFASKFAYLI. The Extracellular segment spans residues 136–164; sequence WNITAPYSTAHLENASNLECILHYKQTAG. A helical transmembrane segment spans residues 165–185; sequence IVIGFEIVGAFVVRIVVAQLL. Residues 186–193 are Cytoplasmic-facing; it reads ARPALIKL. A helical transmembrane segment spans residues 194–214; it reads IPFAISAYLSLALYVVGVPGL. The Extracellular portion of the chain corresponds to 215–233; the sequence is NPIVATARLYGCRGIDNSS. Residues 234-254 form a helical membrane-spanning segment; that stretch reads FFILYWFCPVLGWLTGAYVVG. At 255 to 280 the chain is on the cytoplasmic side; it reads QKSPSKKSAKDVKAEKKAKAAAKKSD. A disordered region spans residues 256 to 280; it reads KSPSKKSAKDVKAEKKAKAAAKKSD. The span at 262–280 shows a compositional bias: basic and acidic residues; it reads SAKDVKAEKKAKAAAKKSD.

Belongs to the MIP/aquaporin (TC 1.A.8) family.

The protein localises to the membrane. The sequence is that of Putative aquaporin-10 (aqp-10) from Caenorhabditis elegans.